The sequence spans 274 residues: Penicillin-insensitive murein endopeptidase (274 aa).

The signal sequence occupies residues 1-19 (MNKTAIALLALLASSASLA). Cystine bridges form between C44-C265, C187-C235, and C216-C223. Residues H110, H113, D120, D147, H150, and H211 each coordinate Zn(2+). Residues 227–274 (PLPPPGDGCGAELQSWFEPPKPGTTKPEKKTPPPLPPSCQALLDEHVI) are disordered.

It belongs to the peptidase M74 family. As to quaternary structure, dimer. Zn(2+) serves as cofactor.

It is found in the periplasm. Its function is as follows. Murein endopeptidase that cleaves the D-alanyl-meso-2,6-diamino-pimelyl amide bond that connects peptidoglycan strands. Likely plays a role in the removal of murein from the sacculus. This Escherichia coli O1:K1 / APEC protein is Penicillin-insensitive murein endopeptidase.